The sequence spans 121 residues: Large ribosomal subunit protein bL20 (121 aa).

It belongs to the bacterial ribosomal protein bL20 family.

In terms of biological role, binds directly to 23S ribosomal RNA and is necessary for the in vitro assembly process of the 50S ribosomal subunit. It is not involved in the protein synthesizing functions of that subunit. The polypeptide is Large ribosomal subunit protein bL20 (Sphingopyxis alaskensis (strain DSM 13593 / LMG 18877 / RB2256) (Sphingomonas alaskensis)).